The sequence spans 183 residues: SAYSvFN domain-containing protein 1 (183 aa).

Topologically, residues 1 to 105 (MEQRLAEFRA…SFLTNITFLK (105 aa)) are cytoplasmic. Positions 11 to 36 (ARKRAGLAAQPPAASQGAQTPGEKAE) are disordered. Low complexity predominate over residues 16-36 (GLAAQPPAASQGAQTPGEKAE). The middle helical (MH) stretch occupies residues 91–105 (SCWDQSFLTNITFLK). Positions 106-126 (VLLWLVLLGLFVELEFGLAYF) form an intramembrane region, helical. Topologically, residues 127–183 (VLSLFYWMYVGTRGPEEKKEGEKSAYSVFNPGCEAIQGTLTAEQLERELQLRPLAGR) are cytoplasmic.

The protein belongs to the SAYSD1 family. Associates (via N-terminus) with ribosomes.

The protein resides in the endoplasmic reticulum membrane. Its subcellular location is the cytoplasmic vesicle membrane. Ufmylation 'reader' component of a translocation-associated quality control pathway, a mechanism that takes place when a ribosome has stalled during translation, and which is required to degrade clogged substrates. Specifically recognizes and binds ufmylated ribosomes when a ribosome has stalled, promoting the transport of stalled nascent chain via the TRAPP complex to lysosomes for degradation. This Homo sapiens (Human) protein is SAYSvFN domain-containing protein 1.